The sequence spans 637 residues: Chaperone protein HtpG (637 aa).

The tract at residues 1 to 335 (MQGTVNSERL…SSDLPLNISR (335 aa)) is a; substrate-binding. Residues 336–559 (ETLQNNKIIE…DGSMDIRMER (224 aa)) form a b region. Positions 560–637 (FLREQKQLNY…RMNSVLSQIN (78 aa)) are c.

The protein belongs to the heat shock protein 90 family. Homodimer.

The protein resides in the cytoplasm. Functionally, molecular chaperone. Has ATPase activity. This chain is Chaperone protein HtpG, found in Ehrlichia ruminantium (strain Gardel).